Reading from the N-terminus, the 309-residue chain is Ribosomal RNA small subunit methyltransferase H (309 aa).

S-adenosyl-L-methionine is bound by residues 36-38 (GGH), Asp56, Phe82, Asp103, and Gln110.

It belongs to the methyltransferase superfamily. RsmH family.

The protein localises to the cytoplasm. It carries out the reaction cytidine(1402) in 16S rRNA + S-adenosyl-L-methionine = N(4)-methylcytidine(1402) in 16S rRNA + S-adenosyl-L-homocysteine + H(+). Its function is as follows. Specifically methylates the N4 position of cytidine in position 1402 (C1402) of 16S rRNA. The sequence is that of Ribosomal RNA small subunit methyltransferase H from Hahella chejuensis (strain KCTC 2396).